The sequence spans 117 residues: Aspartate 1-decarboxylase (117 aa).

The active-site Schiff-base intermediate with substrate; via pyruvic acid is the S25. S25 carries the post-translational modification Pyruvic acid (Ser). T57 contributes to the substrate binding site. Y58 functions as the Proton donor in the catalytic mechanism. 72–74 contacts substrate; it reads GAA.

This sequence belongs to the PanD family. In terms of assembly, heterooctamer of four alpha and four beta subunits. It depends on pyruvate as a cofactor. Is synthesized initially as an inactive proenzyme, which is activated by self-cleavage at a specific serine bond to produce a beta-subunit with a hydroxyl group at its C-terminus and an alpha-subunit with a pyruvoyl group at its N-terminus.

It is found in the cytoplasm. It catalyses the reaction L-aspartate + H(+) = beta-alanine + CO2. It participates in cofactor biosynthesis; (R)-pantothenate biosynthesis; beta-alanine from L-aspartate: step 1/1. Its function is as follows. Catalyzes the pyruvoyl-dependent decarboxylation of aspartate to produce beta-alanine. This is Aspartate 1-decarboxylase from Helicobacter pylori (strain J99 / ATCC 700824) (Campylobacter pylori J99).